Reading from the N-terminus, the 273-residue chain is Rhamnulose-1-phosphate aldolase (273 aa).

Glu117 is a catalytic residue. Zn(2+) is bound by residues His140, His142, and His211.

Belongs to the aldolase class II family. RhaD subfamily. Zn(2+) serves as cofactor.

The protein resides in the cytoplasm. It catalyses the reaction L-rhamnulose 1-phosphate = (S)-lactaldehyde + dihydroxyacetone phosphate. The protein operates within carbohydrate degradation; L-rhamnose degradation; glycerone phosphate from L-rhamnose: step 3/3. Functionally, catalyzes the reversible cleavage of L-rhamnulose-1-phosphate to dihydroxyacetone phosphate (DHAP) and L-lactaldehyde. In Listeria monocytogenes serotype 4b (strain F2365), this protein is Rhamnulose-1-phosphate aldolase.